The primary structure comprises 217 residues: N-(5'-phosphoribosyl)anthranilate isomerase (217 aa).

It belongs to the TrpF family.

The catalysed reaction is N-(5-phospho-beta-D-ribosyl)anthranilate = 1-(2-carboxyphenylamino)-1-deoxy-D-ribulose 5-phosphate. It functions in the pathway amino-acid biosynthesis; L-tryptophan biosynthesis; L-tryptophan from chorismate: step 3/5. The polypeptide is N-(5'-phosphoribosyl)anthranilate isomerase (Chlorobium phaeovibrioides (strain DSM 265 / 1930) (Prosthecochloris vibrioformis (strain DSM 265))).